A 327-amino-acid polypeptide reads, in one-letter code: 2-keto-3-deoxygluconate permease (327 aa).

10 helical membrane passes run 10–30 (IPGGMMLVPLFLGALCHTFSP), 42–62 (GMITGTVPILAVWFFCMGASI), 73–93 (KSGTLVVTKIAVAWVVAAIAS), 95–115 (IIPEHGVEVGFFAGLSTLALV), 139–159 (AGAFVLMSLESGPLMTMIILG), 163–183 (IASFEPHVFVGAVLPFLVGFA), 199–219 (VQTLIPFFAFALGNTIDLTVI), 224–244 (LLGILLGVAVIIVTGIPLIIA), 254–274 (TAGIAASSSAGAAVATPVLIA), and 289–309 (SLVATAVIVTSILVPILTSIW).

This sequence belongs to the KdgT transporter family.

It localises to the cell inner membrane. It carries out the reaction 2-dehydro-3-deoxy-D-gluconate(in) + H(+)(in) = 2-dehydro-3-deoxy-D-gluconate(out) + H(+)(out). In terms of biological role, catalyzes the proton-dependent uptake of 2-keto-3-deoxygluconate (KDG) into the cell. This is 2-keto-3-deoxygluconate permease from Escherichia coli O157:H7.